The chain runs to 341 residues: tRNA N6-adenosine threonylcarbamoyltransferase (341 aa).

Fe cation is bound by residues H115 and H119. Substrate contacts are provided by residues V138–G142, D171, G184, D188, and N279. D307 lines the Fe cation pocket.

The protein belongs to the KAE1 / TsaD family. Requires Fe(2+) as cofactor.

It localises to the cytoplasm. The catalysed reaction is L-threonylcarbamoyladenylate + adenosine(37) in tRNA = N(6)-L-threonylcarbamoyladenosine(37) in tRNA + AMP + H(+). Its function is as follows. Required for the formation of a threonylcarbamoyl group on adenosine at position 37 (t(6)A37) in tRNAs that read codons beginning with adenine. Is involved in the transfer of the threonylcarbamoyl moiety of threonylcarbamoyl-AMP (TC-AMP) to the N6 group of A37, together with TsaE and TsaB. TsaD likely plays a direct catalytic role in this reaction. This chain is tRNA N6-adenosine threonylcarbamoyltransferase, found in Clostridium novyi (strain NT).